A 193-amino-acid polypeptide reads, in one-letter code: Mediator of RNA polymerase II transcription subunit 30 (193 aa).

The interval Met1–Gln20 is disordered. The residue at position 2 (Ser2) is an N-acetylserine. Positions Gly10–Gln20 are enriched in low complexity. A coiled-coil region spans residues Tyr71 to Arg93.

Belongs to the Mediator complex subunit 30 family. As to quaternary structure, component of the Mediator complex, which is composed of MED1, MED4, MED6, MED7, MED8, MED9, MED10, MED11, MED12, MED13, MED13L, MED14, MED15, MED16, MED17, MED18, MED19, MED20, MED21, MED22, MED23, MED24, MED25, MED26, MED27, MED29, MED30, MED31, CCNC, CDK8 and CDC2L6/CDK11. The MED12, MED13, CCNC and CDK8 subunits form a distinct module termed the CDK8 module. Mediator containing the CDK8 module is less active than Mediator lacking this module in supporting transcriptional activation. Individual preparations of the Mediator complex lacking one or more distinct subunits have been variously termed ARC, CRSP, DRIP, PC2, SMCC and TRAP.

The protein resides in the nucleus. Functionally, component of the Mediator complex, a coactivator involved in the regulated transcription of nearly all RNA polymerase II-dependent genes. Mediator functions as a bridge to convey information from gene-specific regulatory proteins to the basal RNA polymerase II transcription machinery. Mediator is recruited to promoters by direct interactions with regulatory proteins and serves as a scaffold for the assembly of a functional preinitiation complex with RNA polymerase II and the general transcription factors. This chain is Mediator of RNA polymerase II transcription subunit 30 (MED30), found in Bos taurus (Bovine).